The chain runs to 1430 residues: FYVE, RhoGEF and PH domain-containing protein 6 (1430 aa).

The disordered stretch occupies residues 1–36 (MTSAAEIKKPPVAPKPKFVVANNKPAPPPIAPKPDI). Low complexity predominate over residues 15–24 (KPKFVVANNK). Ser-231 is modified (phosphoserine). Residues 330-351 (CVDTPSESTEEPGNSDSSSSCL) form a disordered region. Residues 334–351 (PSESTEEPGNSDSSSSCL) are compositionally biased toward polar residues. Ser-515 bears the Phosphoserine mark. A disordered region spans residues 516-538 (EELLEKSSYPSSEEKSSEKSLER). Residues 527–538 (SEEKSSEKSLER) are compositionally biased toward basic and acidic residues. Phosphoserine is present on residues Ser-554, Ser-605, Ser-692, and Ser-721. 2 disordered regions span residues 695–739 (NYSL…PYKS) and 800–869 (PDGQ…NGMK). The span at 728-739 (SRESSSQAPYKS) shows a compositional bias: polar residues. The segment covering 831–847 (PSDEEEIINSSDEDDVS) has biased composition (acidic residues). Positions 851–868 (SKGEPDPLEDKQDEDNGM) are enriched in basic and acidic residues. The 190-residue stretch at 871 to 1060 (KVHHIAKEIM…IEVANHANDT (190 aa)) folds into the DH domain. The region spanning 1089 to 1183 (VFLKEGILMK…WLEAISRAIE (95 aa)) is the PH 1 domain. Ser-1197 carries the post-translational modification Phosphoserine. Residues 1222 to 1281 (DTRATMCMICTSEFTLTWRRHHCRACGKIVCQACSSNKYGLDYLKNQPARVCEHCFQELQ) form an FYVE-type zinc finger. Cys-1228, Cys-1231, Cys-1244, Cys-1247, Cys-1252, Cys-1255, Cys-1273, and Cys-1276 together coordinate Zn(2+). Residues 1333–1429 (DSSMSGYLYR…WIEAFQEGTI (97 aa)) form the PH 2 domain.

Its subcellular location is the cytoplasm. The protein localises to the cytoskeleton. Its function is as follows. May activate CDC42, a member of the Ras-like family of Rho- and Rac proteins, by exchanging bound GDP for free GTP. May play a role in regulating the actin cytoskeleton and cell shape. In Homo sapiens (Human), this protein is FYVE, RhoGEF and PH domain-containing protein 6 (FGD6).